The primary structure comprises 346 residues: Actin-like protein 10 (346 aa).

This sequence belongs to the actin family.

The chain is Actin-like protein 10 (Actl10) from Mus musculus (Mouse).